A 1025-amino-acid chain; its full sequence is Multidrug resistance protein MdtC (1025 aa).

12 consecutive transmembrane segments (helical) span residues 3 to 23, 333 to 353, 360 to 380, 387 to 407, 431 to 451, 463 to 483, 528 to 548, 853 to 873, 875 to 895, 897 to 917, 953 to 973, and 984 to 1004; these read FFAL…AITL, EVEQ…FLFL, IIPA…MYLC, LSLM…IVVL, VGFT…PLLL, FAVT…TLTP, LVGA…ISIP, VILI…LYES, VHPL…LLAL, LFNA…IGIV, PIMM…LSGG, and ITIV…TPVV.

This sequence belongs to the resistance-nodulation-cell division (RND) (TC 2.A.6) family. MdtC subfamily. In terms of assembly, part of a tripartite efflux system composed of MdtA, MdtB and MdtC. MdtC forms a heteromultimer with MdtB.

Its subcellular location is the cell inner membrane. The MdtABC tripartite complex confers resistance against novobiocin and deoxycholate. The chain is Multidrug resistance protein MdtC from Escherichia coli O81 (strain ED1a).